Consider the following 203-residue polypeptide: Ras-related protein Rab-8B (203 aa).

GTP-binding positions include 22–29 (GDSGVGKS), 70–74 (DTAGQ), and 128–131 (NKCD). 2 S-geranylgeranyl cysteine lipidation sites follow: C202 and C203.

It belongs to the small GTPase superfamily. Rab family.

Its subcellular location is the cell membrane. Functionally, protein transport. Probably involved in vesicular traffic. The polypeptide is Ras-related protein Rab-8B (rab8B) (Dictyostelium discoideum (Social amoeba)).